Reading from the N-terminus, the 598-residue chain is UvrABC system protein C (598 aa).

In terms of domain architecture, GIY-YIG spans 14-91; it reads DSPGCYLHKD…IQKNMPKYNI (78 aa). One can recognise a UVR domain in the interval 196-231; sequence DKIIEDLRSKMLAASEEMAFERAAEYRDLISGIATM.

The protein belongs to the UvrC family. In terms of assembly, interacts with UvrB in an incision complex.

Its subcellular location is the cytoplasm. Its function is as follows. The UvrABC repair system catalyzes the recognition and processing of DNA lesions. UvrC both incises the 5' and 3' sides of the lesion. The N-terminal half is responsible for the 3' incision and the C-terminal half is responsible for the 5' incision. The sequence is that of UvrABC system protein C from Streptococcus pyogenes serotype M28 (strain MGAS6180).